A 201-amino-acid chain; its full sequence is IMP cyclohydrolase (201 aa).

Belongs to the archaeal IMP cyclohydrolase family.

It carries out the reaction IMP + H2O = 5-formamido-1-(5-phospho-D-ribosyl)imidazole-4-carboxamide. Its pathway is purine metabolism; IMP biosynthesis via de novo pathway; IMP from 5-formamido-1-(5-phospho-D-ribosyl)imidazole-4-carboxamide: step 1/1. Catalyzes the cyclization of 5-formylamidoimidazole-4-carboxamide ribonucleotide to IMP. This Methanococcus maripaludis (strain DSM 14266 / JCM 13030 / NBRC 101832 / S2 / LL) protein is IMP cyclohydrolase.